The following is a 354-amino-acid chain: Uroporphyrinogen decarboxylase (354 aa).

Substrate-binding positions include 27-31, Asp-77, Tyr-154, Thr-209, and His-327; that span reads RQAGR.

The protein belongs to the uroporphyrinogen decarboxylase family. As to quaternary structure, homodimer.

The protein resides in the cytoplasm. The enzyme catalyses uroporphyrinogen III + 4 H(+) = coproporphyrinogen III + 4 CO2. It functions in the pathway porphyrin-containing compound metabolism; protoporphyrin-IX biosynthesis; coproporphyrinogen-III from 5-aminolevulinate: step 4/4. Its function is as follows. Catalyzes the decarboxylation of four acetate groups of uroporphyrinogen-III to yield coproporphyrinogen-III. This is Uroporphyrinogen decarboxylase from Salmonella arizonae (strain ATCC BAA-731 / CDC346-86 / RSK2980).